Consider the following 335-residue polypeptide: N-acetyl-gamma-glutamyl-phosphate reductase (335 aa).

Residue C156 is part of the active site.

Belongs to the NAGSA dehydrogenase family. Type 1 subfamily.

Its subcellular location is the cytoplasm. The catalysed reaction is N-acetyl-L-glutamate 5-semialdehyde + phosphate + NADP(+) = N-acetyl-L-glutamyl 5-phosphate + NADPH + H(+). The protein operates within amino-acid biosynthesis; L-arginine biosynthesis; N(2)-acetyl-L-ornithine from L-glutamate: step 3/4. Catalyzes the NADPH-dependent reduction of N-acetyl-5-glutamyl phosphate to yield N-acetyl-L-glutamate 5-semialdehyde. The chain is N-acetyl-gamma-glutamyl-phosphate reductase from Aeromonas hydrophila subsp. hydrophila (strain ATCC 7966 / DSM 30187 / BCRC 13018 / CCUG 14551 / JCM 1027 / KCTC 2358 / NCIMB 9240 / NCTC 8049).